Here is a 35-residue protein sequence, read N- to C-terminus: Photosystem II reaction center protein T (35 aa).

The helical transmembrane segment at 3 to 23 (ALVYTFLLVSTLGIIFFAIFF) threads the bilayer.

The protein belongs to the PsbT family. PSII is composed of 1 copy each of membrane proteins PsbA, PsbB, PsbC, PsbD, PsbE, PsbF, PsbH, PsbI, PsbJ, PsbK, PsbL, PsbM, PsbT, PsbY, PsbZ, Psb30/Ycf12, at least 3 peripheral proteins of the oxygen-evolving complex and a large number of cofactors. It forms dimeric complexes.

Its subcellular location is the plastid. The protein localises to the chloroplast thylakoid membrane. Its function is as follows. Found at the monomer-monomer interface of the photosystem II (PS II) dimer, plays a role in assembly and dimerization of PSII. PSII is a light-driven water plastoquinone oxidoreductase, using light energy to abstract electrons from H(2)O, generating a proton gradient subsequently used for ATP formation. This chain is Photosystem II reaction center protein T, found in Metasequoia glyptostroboides (Dawn redwood).